The chain runs to 89 residues: Small ribosomal subunit protein uS15 (89 aa).

It belongs to the universal ribosomal protein uS15 family. In terms of assembly, part of the 30S ribosomal subunit. Forms a bridge to the 50S subunit in the 70S ribosome, contacting the 23S rRNA.

Its function is as follows. One of the primary rRNA binding proteins, it binds directly to 16S rRNA where it helps nucleate assembly of the platform of the 30S subunit by binding and bridging several RNA helices of the 16S rRNA. Forms an intersubunit bridge (bridge B4) with the 23S rRNA of the 50S subunit in the ribosome. The chain is Small ribosomal subunit protein uS15 from Rhizobium meliloti (strain 1021) (Ensifer meliloti).